We begin with the raw amino-acid sequence, 180 residues long: Pro-glucagon (180 aa).

The first 20 residues, 1–20, serve as a signal peptide directing secretion; the sequence is MKSVYFVAGLFIMLAQGSWQ. The interval 23-58 is disordered; that stretch reads LQDTEEKPRSVSASQTDMLDDPDQMNEDKRHSQGTF. Residue Ser54 is modified to Phosphoserine. The propeptide occupies 84 to 89; sequence NRNNIA. Phosphoserine is present on residues Ser105 and Ser108. Arg127 bears the Arginine amide mark. Residues 131-145 constitute a propeptide that is removed on maturation; sequence DFPEEVAIVEELGRR. Ser150 and Ser152 each carry phosphoserine.

The protein belongs to the glucagon family. Post-translationally, proglucagon is post-translationally processed in a tissue-specific manner in pancreatic A cells and intestinal L cells. In pancreatic A cells, the major bioactive hormone is glucagon cleaved by PCSK2/PC2. In the intestinal L cells PCSK1/PC1 liberates GLP-1, GLP-2, glicentin and oxyntomodulin. GLP-1 is further N-terminally truncated by post-translational processing in the intestinal L cells resulting in GLP-1(7-37) GLP-1-(7-36)amide. The C-terminal amidation is neither important for the metabolism of GLP-1 nor for its effects on the endocrine pancreas.

It is found in the secreted. Plays a key role in glucose metabolism and homeostasis. Regulates blood glucose by increasing gluconeogenesis and decreasing glycolysis. A counterregulatory hormone of insulin, raises plasma glucose levels in response to insulin-induced hypoglycemia. Plays an important role in initiating and maintaining hyperglycemic conditions in diabetes. In terms of biological role, potent stimulator of glucose-dependent insulin release. Also stimulates insulin release in response to IL6. Plays important roles on gastric motility and the suppression of plasma glucagon levels. May be involved in the suppression of satiety and stimulation of glucose disposal in peripheral tissues, independent of the actions of insulin. Has growth-promoting activities on intestinal epithelium. May also regulate the hypothalamic pituitary axis (HPA) via effects on LH, TSH, CRH, oxytocin, and vasopressin secretion. Increases islet mass through stimulation of islet neogenesis and pancreatic beta cell proliferation. Inhibits beta cell apoptosis. Its function is as follows. Stimulates intestinal growth and up-regulates villus height in the small intestine, concomitant with increased crypt cell proliferation and decreased enterocyte apoptosis. The gastrointestinal tract, from the stomach to the colon is the principal target for GLP-2 action. Plays a key role in nutrient homeostasis, enhancing nutrient assimilation through enhanced gastrointestinal function, as well as increasing nutrient disposal. Stimulates intestinal glucose transport and decreases mucosal permeability. Functionally, significantly reduces food intake. Inhibits gastric emptying in humans. Suppression of gastric emptying may lead to increased gastric distension, which may contribute to satiety by causing a sensation of fullness. May modulate gastric acid secretion and the gastro-pyloro-duodenal activity. May play an important role in intestinal mucosal growth in the early period of life. This is Pro-glucagon (GCG) from Cavia porcellus (Guinea pig).